The chain runs to 419 residues: Enolase (419 aa).

(2R)-2-phosphoglycerate is bound at residue glutamine 161. Residue glutamate 205 is the Proton donor of the active site. Aspartate 240, glutamate 283, and aspartate 309 together coordinate Mg(2+). Positions 334, 363, 364, and 385 each coordinate (2R)-2-phosphoglycerate. Lysine 334 acts as the Proton acceptor in catalysis.

Belongs to the enolase family. Mg(2+) serves as cofactor.

The protein localises to the cytoplasm. It localises to the secreted. Its subcellular location is the cell surface. It carries out the reaction (2R)-2-phosphoglycerate = phosphoenolpyruvate + H2O. The protein operates within carbohydrate degradation; glycolysis; pyruvate from D-glyceraldehyde 3-phosphate: step 4/5. Its function is as follows. Catalyzes the reversible conversion of 2-phosphoglycerate (2-PG) into phosphoenolpyruvate (PEP). It is essential for the degradation of carbohydrates via glycolysis. This is Enolase from Saccharolobus islandicus (strain Y.G.57.14 / Yellowstone #1) (Sulfolobus islandicus).